The following is a 283-amino-acid chain: Pantothenate synthetase (283 aa).

Residue 30-37 participates in ATP binding; that stretch reads MGCLHEGH. His37 acts as the Proton donor in catalysis. Gln61 lines the (R)-pantoate pocket. Gln61 serves as a coordination point for beta-alanine. An ATP-binding site is contributed by 147-150; it reads GQKD. Gln153 is a (R)-pantoate binding site. Residues Val176 and 184–187 contribute to the ATP site; that span reads KSSR.

It belongs to the pantothenate synthetase family. Homodimer.

The protein resides in the cytoplasm. The catalysed reaction is (R)-pantoate + beta-alanine + ATP = (R)-pantothenate + AMP + diphosphate + H(+). It functions in the pathway cofactor biosynthesis; (R)-pantothenate biosynthesis; (R)-pantothenate from (R)-pantoate and beta-alanine: step 1/1. Functionally, catalyzes the condensation of pantoate with beta-alanine in an ATP-dependent reaction via a pantoyl-adenylate intermediate. This Clostridium novyi (strain NT) protein is Pantothenate synthetase.